We begin with the raw amino-acid sequence, 355 residues long: Uroporphyrinogen decarboxylase (355 aa).

Residues 27 to 31 (RQAGR), aspartate 77, tyrosine 154, threonine 209, and histidine 327 contribute to the substrate site.

The protein belongs to the uroporphyrinogen decarboxylase family. As to quaternary structure, homodimer.

It localises to the cytoplasm. The catalysed reaction is uroporphyrinogen III + 4 H(+) = coproporphyrinogen III + 4 CO2. Its pathway is porphyrin-containing compound metabolism; protoporphyrin-IX biosynthesis; coproporphyrinogen-III from 5-aminolevulinate: step 4/4. In terms of biological role, catalyzes the decarboxylation of four acetate groups of uroporphyrinogen-III to yield coproporphyrinogen-III. This chain is Uroporphyrinogen decarboxylase, found in Yersinia pseudotuberculosis serotype O:1b (strain IP 31758).